Here is a 442-residue protein sequence, read N- to C-terminus: tRNA-2-methylthio-N(6)-dimethylallyladenosine synthase (442 aa).

One can recognise an MTTase N-terminal domain in the interval 5-122; it reads KRIFIKTFGC…LPDMIESKRR (118 aa). The [4Fe-4S] cluster site is built by Cys-14, Cys-51, Cys-85, Cys-159, Cys-163, and Cys-166. The Radical SAM core domain occupies 145-377; the sequence is RVEGAAAFLS…QALNEAQGKA (233 aa). One can recognise a TRAM domain in the interval 380-442; it reads ASMVGSIQRV…LSHTLRGELV (63 aa).

Belongs to the methylthiotransferase family. MiaB subfamily. In terms of assembly, monomer. The cofactor is [4Fe-4S] cluster.

Its subcellular location is the cytoplasm. It carries out the reaction N(6)-dimethylallyladenosine(37) in tRNA + (sulfur carrier)-SH + AH2 + 2 S-adenosyl-L-methionine = 2-methylsulfanyl-N(6)-dimethylallyladenosine(37) in tRNA + (sulfur carrier)-H + 5'-deoxyadenosine + L-methionine + A + S-adenosyl-L-homocysteine + 2 H(+). Functionally, catalyzes the methylthiolation of N6-(dimethylallyl)adenosine (i(6)A), leading to the formation of 2-methylthio-N6-(dimethylallyl)adenosine (ms(2)i(6)A) at position 37 in tRNAs that read codons beginning with uridine. The sequence is that of tRNA-2-methylthio-N(6)-dimethylallyladenosine synthase from Methylobacillus flagellatus (strain ATCC 51484 / DSM 6875 / VKM B-1610 / KT).